Reading from the N-terminus, the 645-residue chain is Zinc finger protein 64 (645 aa).

3 consecutive C2H2-type zinc fingers follow at residues 175 to 197 (HKCE…MRCH), 203 to 225 (YKCK…LRIH), and 231 to 253 (FKCQ…LRSH). Glu286 participates in a covalent cross-link: Glycyl lysine isopeptide (Lys-Gly) (interchain with G-Cter in SUMO2). Residues 299-324 (FNCCYPGCHFKTVHGMKDLDRHLRIH) form a C2H2-type 4; atypical zinc finger. 9 consecutive C2H2-type zinc fingers follow at residues 330–352 (HKCE…MRCH), 358–380 (HKCH…LRIH), 386–408 (YKCQ…LRSH), 414–436 (FQCW…MIVH), 442–465 (FKCE…RIKH), 467–489 (FKCL…SRLH), 495–517 (EKCP…SRVH), 523–546 (FKCD…DKVH), and 580–602 (FRCE…KKQH). A Glycyl lysine isopeptide (Lys-Gly) (interchain with G-Cter in SUMO2) cross-link involves residue Asn397. Basic and acidic residues-rich tracts occupy residues 543–554 (DKVHRDEAKTEN) and 600–610 (KQHSDQSENKN). 2 disordered regions span residues 543–567 (DKVH…REGS) and 600–645 (KQHS…SQDL). Phosphoserine is present on Val545. Polar residues predominate over residues 622-631 (ASGQLSTLVS).

The protein belongs to the krueppel C2H2-type zinc-finger protein family. As to quaternary structure, interacts with ZNF70; this interaction promote the transactivation of the HES1 gene. Interacts with NOTCH1.

It localises to the nucleus. May be involved in the regulation of mesenchymal cell differentiation through transactivation of NOTCH1 target genes. This is Zinc finger protein 64 from Homo sapiens (Human).